The chain runs to 725 residues: Phosphatase and actin regulator 4A (725 aa).

The segment covering 1-12 (MGQGASTQTLNP) has biased composition (polar residues). The interval 1–597 (MGQGASTQTL…SSTWNNKEQW (597 aa)) is disordered. The span at 55 to 64 (KPWKWRKKKT) shows a compositional bias: basic residues. 3 stretches are compositionally biased toward basic and acidic residues: residues 65–100 (SDKF…KDIP), 124–147 (GDRK…GERK), and 155–164 (KRNDGTERMT). The RPEL 1 repeat unit spans residues 75–100 (LVLERKMSVRKPREELIERGLLKDIP). Polar residues predominate over residues 166-177 (MIQSFQKMSLMQ). Residues 212–221 (VIAAPSSAEP) show a composition bias toward low complexity. Pro residues predominate over residues 222–235 (APVPPPPIAKPPPR). 2 stretches are compositionally biased toward low complexity: residues 265-276 (PAHTTPATVSTH) and 292-313 (PAHV…LLKQ). The span at 359–368 (TPVTKRNSGD) shows a compositional bias: polar residues. The segment covering 374–384 (PEPPPPAPTSV) has biased composition (pro residues). Over residues 385–401 (PIPAAAPISAPPSTQSD) the composition is skewed to low complexity. The segment covering 402–417 (PPSPTTEPPSQPPPLP) has biased composition (pro residues). Residues 497–510 (QKPELEPRSRRGLV) are compositionally biased toward basic and acidic residues. Composition is skewed to acidic residues over residues 522–536 (AGSE…ESDS) and 545–554 (DNEEDDDEED). Over residues 567-585 (KDTLALKLERQQEKEKSQE) the composition is skewed to basic and acidic residues. RPEL repeat units follow at residues 606-631 (TALT…LAKN) and 644-669 (RRLT…RFHE).

It belongs to the phosphatase and actin regulator family. Binds ppp1ca and actin.

The protein resides in the cytoplasm. Its subcellular location is the cell projection. It localises to the lamellipodium. In terms of biological role, regulator of protein phosphatase 1 (PP1) required for neural tube and optic fissure closure, and enteric neural crest cell (ENCCs) migration during development. Acts as an activator of PP1. During neural tube closure, localizes to the ventral neural tube and activates PP1, leading to down-regulate cell proliferation within cranial neural tissue and the neural retina. Also acts as a regulator of migration of enteric neural crest cells (ENCCs) by activating PP1, leading to repression of the integrin signaling through the rho/rock pathway. The chain is Phosphatase and actin regulator 4A (phactr4a) from Danio rerio (Zebrafish).